The sequence spans 219 residues: Glucagon-2 (219 aa).

An N-terminal signal peptide occupies residues 1–20; it reads MKSTCYMIGILLLILQNTYQ. Propeptides lie at residues 21-50, 84-95, 136-140, 175-178, and 213-219; these read SPVP…LKEV, SGGLSRRNADYE, NAEIE, IRYS, and KDLLEEH. Residues 23–43 are disordered; sequence VPEADGSSRSVKAARNEAVDD.

The protein belongs to the glucagon family.

Its subcellular location is the secreted. In terms of biological role, promotes hydrolysis of glycogen and lipids, and raises the blood sugar level. This Xenopus laevis (African clawed frog) protein is Glucagon-2 (gcg2).